A 363-amino-acid polypeptide reads, in one-letter code: Histidinol-phosphate aminotransferase (363 aa).

Position 227 is an N6-(pyridoxal phosphate)lysine (Lys227).

It belongs to the class-II pyridoxal-phosphate-dependent aminotransferase family. Histidinol-phosphate aminotransferase subfamily. As to quaternary structure, homodimer. Pyridoxal 5'-phosphate is required as a cofactor.

The catalysed reaction is L-histidinol phosphate + 2-oxoglutarate = 3-(imidazol-4-yl)-2-oxopropyl phosphate + L-glutamate. Its pathway is amino-acid biosynthesis; L-histidine biosynthesis; L-histidine from 5-phospho-alpha-D-ribose 1-diphosphate: step 7/9. The protein is Histidinol-phosphate aminotransferase of Akkermansia muciniphila (strain ATCC BAA-835 / DSM 22959 / JCM 33894 / BCRC 81048 / CCUG 64013 / CIP 107961 / Muc).